A 154-amino-acid polypeptide reads, in one-letter code: 3-hydroxyacyl-[acyl-carrier-protein] dehydratase FabZ (154 aa).

The active site involves histidine 60.

Belongs to the thioester dehydratase family. FabZ subfamily.

The protein localises to the cytoplasm. The enzyme catalyses a (3R)-hydroxyacyl-[ACP] = a (2E)-enoyl-[ACP] + H2O. Its function is as follows. Involved in unsaturated fatty acids biosynthesis. Catalyzes the dehydration of short chain beta-hydroxyacyl-ACPs and long chain saturated and unsaturated beta-hydroxyacyl-ACPs. This Haemophilus ducreyi (strain 35000HP / ATCC 700724) protein is 3-hydroxyacyl-[acyl-carrier-protein] dehydratase FabZ.